The chain runs to 339 residues: Phosphoribosylformylglycinamidine cyclo-ligase (339 aa).

The protein belongs to the AIR synthase family.

The protein localises to the cytoplasm. It catalyses the reaction 2-formamido-N(1)-(5-O-phospho-beta-D-ribosyl)acetamidine + ATP = 5-amino-1-(5-phospho-beta-D-ribosyl)imidazole + ADP + phosphate + H(+). It functions in the pathway purine metabolism; IMP biosynthesis via de novo pathway; 5-amino-1-(5-phospho-D-ribosyl)imidazole from N(2)-formyl-N(1)-(5-phospho-D-ribosyl)glycinamide: step 2/2. This is Phosphoribosylformylglycinamidine cyclo-ligase from Oceanobacillus iheyensis (strain DSM 14371 / CIP 107618 / JCM 11309 / KCTC 3954 / HTE831).